We begin with the raw amino-acid sequence, 201 residues long: Holliday junction branch migration complex subunit RuvA (201 aa).

A domain I region spans residues 1–63; it reads MYDYIKGTVT…EDNISLFGFQ (63 aa). The segment at 64-142 is domain II; sequence TTEERYLFKK…DVVASEIVYV (79 aa). The flexible linker stretch occupies residues 143–153; that stretch reads APENDMVAGLS. The interval 153–201 is domain III; sequence SPQLEEAVLALEALGYSTRELKKVIPKLAKEEDLTSDAYIKLALQLMTK.

The protein belongs to the RuvA family. Homotetramer. Forms an RuvA(8)-RuvB(12)-Holliday junction (HJ) complex. HJ DNA is sandwiched between 2 RuvA tetramers; dsDNA enters through RuvA and exits via RuvB. An RuvB hexamer assembles on each DNA strand where it exits the tetramer. Each RuvB hexamer is contacted by two RuvA subunits (via domain III) on 2 adjacent RuvB subunits; this complex drives branch migration. In the full resolvosome a probable DNA-RuvA(4)-RuvB(12)-RuvC(2) complex forms which resolves the HJ.

It localises to the cytoplasm. Functionally, the RuvA-RuvB-RuvC complex processes Holliday junction (HJ) DNA during genetic recombination and DNA repair, while the RuvA-RuvB complex plays an important role in the rescue of blocked DNA replication forks via replication fork reversal (RFR). RuvA specifically binds to HJ cruciform DNA, conferring on it an open structure. The RuvB hexamer acts as an ATP-dependent pump, pulling dsDNA into and through the RuvAB complex. HJ branch migration allows RuvC to scan DNA until it finds its consensus sequence, where it cleaves and resolves the cruciform DNA. This chain is Holliday junction branch migration complex subunit RuvA, found in Listeria monocytogenes serotype 4a (strain HCC23).